The sequence spans 445 residues: Peptide chain release factor 1, mitochondrial (445 aa).

Residues M1–Y61 constitute a mitochondrion transit peptide. Residues P297–I361 are GGQ domain. Residues G311–Q313 carry the GGQ motif. An N5-methylglutamine modification is found at Q313.

Belongs to the prokaryotic/mitochondrial release factor family. In terms of processing, methylation of glutamine in the GGQ triplet by HEMK1 is conserved from bacteria to mammals.

It localises to the mitochondrion. Mitochondrial peptide chain release factor that directs the termination of translation in response to the peptide chain non-canonical stop codons AGG and AGA. Non-canonical termination codons AGG and AGA are found at the end of MT-CO1/COX1 and MT-ND6/ND6 open reading frames, respectively. Recognizes non-canonical stop codons via a network of interactions between the codon, MTRF1 and the ribosomal RNA (rRNA): in contrast to other translation release factors, which identify the codon in the A-site via direct interactions of amino acid side chains with the bases, MTRF1 repositions the first 2 bases of the stop codon to use an intricate network of interactions that includes residues of the release factor, the rRNA of the small ribosomal subunit, as well as neighboring bases of the mRNA. The sequence is that of Peptide chain release factor 1, mitochondrial from Homo sapiens (Human).